The chain runs to 481 residues: CASP8 and FADD-like apoptosis regulator (481 aa).

DED domains are found at residues 6 to 78 and 97 to 172; these read VSAE…RILK and DYRV…LNTK. An interaction with CASP8 region spans residues 6-200; sequence VSAEVIHQVE…QASLPKLSIK (195 aa). The interaction with FADD stretch occupies residues 6–229; that stretch reads VSAEVIHQVE…DSQRTLVKTS (224 aa). The tract at residues 6-307 is interaction with CASP8 propeptide; it reads VSAEVIHQVE…YASMAQHQDY (302 aa). The segment at 197–436 is interaction with CASP3; that stretch reads LSIKYNSRLQ…KLSQQLKQGR (240 aa). An interaction with TRAF1 and TRAF2 region spans residues 197–481; it reads LSIKYNSRLQ…LRKKLILAPT (285 aa). The segment at 219–481 is interaction with CASP8 subunits p18 and p10; it reads RDSQRTLVKT…LRKKLILAPT (263 aa). Residues 265–360 form a caspase region; sequence DTKYLQETFT…RGKPKLFFIQ (96 aa). Residues 372–481 are interaction with CASP8; that stretch reads SSLEVDGPSI…LRKKLILAPT (110 aa).

Belongs to the peptidase C14A family. TNFRSF6 stimulation triggers recruitment to the death-inducing signaling complex (DISC) formed by TNFRSF6, FADD and CASP8. A proteolytic fragment (p43) stays associated with the DISC. Interacts with RIPK1. In terms of processing, proteolytically processed by CASP8 generating subunits p43 and p12. As to expression, highly expressed in heart.

In terms of biological role, apoptosis regulator protein which may function as a crucial link between cell survival and cell death pathways in mammalian cells. Acts as an inhibitor of TNFRSF6 mediated apoptosis. A proteolytic fragment (p43) is likely retained in the death-inducing signaling complex (DISC) thereby blocking further recruitment and processing of caspase-8 at the complex. Full length and shorter isoforms have been shown either to induce apoptosis or to reduce TNFRSF-triggered apoptosis. Lacks enzymatic (caspase) activity. This chain is CASP8 and FADD-like apoptosis regulator (Cflar), found in Mus musculus (Mouse).